A 1234-amino-acid polypeptide reads, in one-letter code: DNA-directed RNA polymerase subunit beta (1234 aa).

The interval 1187 to 1234 (GREDAPPEEVYEEEYEEEPEELPEDIDFEPDNFDIDSEDLFMDDDYDG) is disordered. Over residues 1192–1234 (PPEEVYEEEYEEEPEELPEDIDFEPDNFDIDSEDLFMDDDYDG) the composition is skewed to acidic residues.

Belongs to the RNA polymerase beta chain family. As to quaternary structure, the RNAP catalytic core consists of 2 alpha, 1 beta, 1 beta' and 1 omega subunit. When a sigma factor is associated with the core the holoenzyme is formed, which can initiate transcription.

The catalysed reaction is RNA(n) + a ribonucleoside 5'-triphosphate = RNA(n+1) + diphosphate. Functionally, DNA-dependent RNA polymerase catalyzes the transcription of DNA into RNA using the four ribonucleoside triphosphates as substrates. The polypeptide is DNA-directed RNA polymerase subunit beta (Caldanaerobacter subterraneus subsp. tengcongensis (strain DSM 15242 / JCM 11007 / NBRC 100824 / MB4) (Thermoanaerobacter tengcongensis)).